Consider the following 268-residue polypeptide: Probable membrane transporter protein HI_0806 (268 aa).

The next 8 helical transmembrane spans lie at 6-26 (IFIL…FGIG), 46-66 (VISA…LLFF), 79-99 (ILWS…SFYF), 101-121 (TAII…KTFL), 147-167 (GGGL…APLV), 178-198 (IAVY…YGYL), 212-232 (LGLN…MSFF), and 248-268 (LLAI…FVFH).

Belongs to the 4-toluene sulfonate uptake permease (TSUP) (TC 2.A.102) family.

Its subcellular location is the cell membrane. This Haemophilus influenzae (strain ATCC 51907 / DSM 11121 / KW20 / Rd) protein is Probable membrane transporter protein HI_0806.